The following is a 490-amino-acid chain: Probable cytosol aminopeptidase (490 aa).

Mn(2+)-binding residues include lysine 256 and aspartate 261. Residue lysine 268 is part of the active site. Mn(2+)-binding residues include aspartate 280, aspartate 340, and glutamate 342. Residue arginine 344 is part of the active site.

It belongs to the peptidase M17 family. The cofactor is Mn(2+).

Its subcellular location is the cytoplasm. It carries out the reaction Release of an N-terminal amino acid, Xaa-|-Yaa-, in which Xaa is preferably Leu, but may be other amino acids including Pro although not Arg or Lys, and Yaa may be Pro. Amino acid amides and methyl esters are also readily hydrolyzed, but rates on arylamides are exceedingly low.. The catalysed reaction is Release of an N-terminal amino acid, preferentially leucine, but not glutamic or aspartic acids.. Its function is as follows. Presumably involved in the processing and regular turnover of intracellular proteins. Catalyzes the removal of unsubstituted N-terminal amino acids from various peptides. The sequence is that of Probable cytosol aminopeptidase from Prochlorococcus marinus (strain MIT 9313).